The sequence spans 159 residues: ATP synthase subunit b 2 (159 aa).

The chain crosses the membrane as a helical span at residues 1–21; it reads MDATFWAFIALVIFVVIVVYM.

The protein belongs to the ATPase B chain family. In terms of assembly, F-type ATPases have 2 components, F(1) - the catalytic core - and F(0) - the membrane proton channel. F(1) has five subunits: alpha(3), beta(3), gamma(1), delta(1), epsilon(1). F(0) has three main subunits: a(1), b(2) and c(10-14). The alpha and beta chains form an alternating ring which encloses part of the gamma chain. F(1) is attached to F(0) by a central stalk formed by the gamma and epsilon chains, while a peripheral stalk is formed by the delta and b chains.

Its subcellular location is the cell inner membrane. F(1)F(0) ATP synthase produces ATP from ADP in the presence of a proton or sodium gradient. F-type ATPases consist of two structural domains, F(1) containing the extramembraneous catalytic core and F(0) containing the membrane proton channel, linked together by a central stalk and a peripheral stalk. During catalysis, ATP synthesis in the catalytic domain of F(1) is coupled via a rotary mechanism of the central stalk subunits to proton translocation. Its function is as follows. Component of the F(0) channel, it forms part of the peripheral stalk, linking F(1) to F(0). This is ATP synthase subunit b 2 from Brucella canis (strain ATCC 23365 / NCTC 10854 / RM-666).